A 249-amino-acid chain; its full sequence is Type I iodothyronine deiodinase (249 aa).

Residues 1 to 12 are Extracellular-facing; it reads MELPLPGLWLKR. The helical; Signal-anchor for type III membrane protein transmembrane segment at 13-33 threads the bilayer; sequence LWVLFQVALHVAMGKVLMTLF. Residues 34–249 lie on the Cytoplasmic side of the membrane; it reads PGRVKQDILA…VRAVLEKLHS (216 aa). The active site involves selenocysteine 126. A non-standard amino acid (selenocysteine) is located at residue selenocysteine 126.

It belongs to the iodothyronine deiodinase family. In terms of assembly, predominantly monomer. Can form homodimers but homodimerization is not essential for enzyme activity.

The protein resides in the cell membrane. Its subcellular location is the endoplasmic reticulum membrane. It localises to the basolateral cell membrane. It catalyses the reaction 3,3',5-triiodo-L-thyronine + iodide + A + H(+) = L-thyroxine + AH2. The enzyme catalyses 3,3',5'-triiodo-L-thyronine + iodide + A + H(+) = L-thyroxine + AH2. The catalysed reaction is 3,3'-diiodo-L-thyronine + iodide + A + H(+) = 3,3',5'-triiodo-L-thyronine + AH2. It carries out the reaction 3,3'-diiodo-L-thyronine + iodide + A + H(+) = 3,3',5-triiodo-L-thyronine + AH2. It catalyses the reaction 3'-iodo-L-thyronine + iodide + A + H(+) = 3',5'-diiodo-L-thyronine + AH2. The enzyme catalyses 3-iodo-L-thyronine + iodide + A + H(+) = 3,5-diiodo-L-thyronine + AH2. The catalysed reaction is 3-iodo-L-thyronine + iodide + A + H(+) = 3,3'-diiodo-L-thyronine + AH2. It carries out the reaction 3,3'-diiodothyronamine + iodide + A + H(+) = 3,3',5'-triiodothyronamine + AH2. It catalyses the reaction 3'-iodothyronamine + iodide + A + H(+) = 3',5'-diiodothyronamine + AH2. The enzyme catalyses 3-iodothyronamine + iodide + A + H(+) = 3,3'-diiodothyronamine + AH2. The catalysed reaction is 3,3'-diiodothyronamine + iodide + A + H(+) = 3,3',5-triiodothyronamine + AH2. It carries out the reaction 3-iodothyronamine + iodide + A + H(+) = 3,5-diiodothyronamine + AH2. It catalyses the reaction 3,3'-diiodo-L-thyronine sulfate + iodide + A + H(+) = 3,3',5'-triiodo-L-thyronine sulfate + AH2. The enzyme catalyses 3,3',5'-triiodo-L-thyronine sulfate + iodide + A + H(+) = L-thyroxine sulfate + AH2. The catalysed reaction is 3,3'-diiodo-L-thyronine sulfate + iodide + A + H(+) = 3,3',5-triiodo-L-thyronine sulfate + AH2. Its function is as follows. Plays a crucial role in the metabolism of thyroid hormones (TH) and has specific roles in TH activation and inactivation by deiodination. Catalyzes the deiodination of L-thyroxine (T4) to 3,5,3'-triiodothyronine (T3) and 3,3',5'-triiodothyronine (rT3) to 3,3'-diiodothyronine (3,3'-T2) via outer-ring deiodination (ORD). Catalyzes the deiodination of T4 to rT3, T3 to 3,3'-T2, 3,5-diiodothyronine (3,5-T2) to 3-monoiodothyronine (3-T1) and 3,3'-T2 to 3-T1 via inner-ring deiodination (IRD). Catalyzes the deiodination of 3',5'-diiodothyronine (3',5'-T2) to 3'-monoiodothyronine (3'-T1) via ORD. Catalyzes the phenolic ring deiodinations of 3,3',5'-triiodothyronamine, 3',5'-diiodothyronamine and 3,3'-diiodothyronamine as well as tyrosyl ring deiodinations of 3,5,3'-triiodothyronamine and 3,5-diiodothyronamine. Catalyzes the deiodination of L-thyroxine sulfate and 3,3',5-triiodo-L-thyronine sulfate via IRD and of 3,3',5'-triiodo-L-thyronine sulfate via ORD. This chain is Type I iodothyronine deiodinase (DIO1), found in Sus scrofa (Pig).